Here is a 269-residue protein sequence, read N- to C-terminus: 4-hydroxy-tetrahydrodipicolinate reductase (269 aa).

NAD(+) is bound by residues 8-13 (GAGGRM) and glutamate 34. Arginine 35 is a binding site for NADP(+). Residues 98 to 100 (GTT) and 122 to 125 (ASNY) each bind NAD(+). The Proton donor/acceptor role is filled by histidine 155. Histidine 156 contributes to the (S)-2,3,4,5-tetrahydrodipicolinate binding site. Residue lysine 159 is the Proton donor of the active site. 165–166 (GT) lines the (S)-2,3,4,5-tetrahydrodipicolinate pocket.

This sequence belongs to the DapB family.

The protein localises to the cytoplasm. It catalyses the reaction (S)-2,3,4,5-tetrahydrodipicolinate + NAD(+) + H2O = (2S,4S)-4-hydroxy-2,3,4,5-tetrahydrodipicolinate + NADH + H(+). The catalysed reaction is (S)-2,3,4,5-tetrahydrodipicolinate + NADP(+) + H2O = (2S,4S)-4-hydroxy-2,3,4,5-tetrahydrodipicolinate + NADPH + H(+). It participates in amino-acid biosynthesis; L-lysine biosynthesis via DAP pathway; (S)-tetrahydrodipicolinate from L-aspartate: step 4/4. In terms of biological role, catalyzes the conversion of 4-hydroxy-tetrahydrodipicolinate (HTPA) to tetrahydrodipicolinate. In Haemophilus ducreyi (strain 35000HP / ATCC 700724), this protein is 4-hydroxy-tetrahydrodipicolinate reductase.